Here is a 300-residue protein sequence, read N- to C-terminus: MKIAILSRDGTLYSCKRLREAAMRRGHLVEILDPLSCYMNINPAASSIHYKGRRLPHYDAVIPRIGSAITFYGTAALRQFELLGSYPLNESVAITRARDKLRSLQLLARQGIDLPITGIAHSPDDTSDLIKMVGGAPLVVKLVEGTQGIGVVLAETRQAAESVIDAFRGLNAHILVQEYIAEAKGCDIRCLVVGNEVVAAIERCAKAGDFRSNLHRGGVASIATITPRERDIAIKAAQTLGLDVAGVDILRAARGPLVMEVNASPGLEGIEKTTGVDIAGRMIQWIERHATPEFCLKIGG.

One can recognise an ATP-grasp domain in the interval leucine 104–glutamate 287. ATP-binding positions include lysine 141, glutamate 178–tyrosine 179, aspartate 187, and arginine 211–asparagine 213. Positions 248, 260, and 262 each coordinate Mg(2+). Mn(2+) is bound by residues aspartate 248, glutamate 260, and asparagine 262.

Belongs to the RimK family. The cofactor is Mg(2+). Mn(2+) is required as a cofactor.

Its function is as follows. An L-glutamate ligase that catalyzes the ATP-dependent post-translational addition of glutamate residues to the C-terminus of ribosomal protein bS6 (RpsF). Is also able to catalyze the synthesis of poly-alpha-glutamate in vitro, via ATP hydrolysis from unprotected glutamate as substrate. The number of glutamate residues added to either RpsF or to poly-alpha-glutamate changes with pH. This chain is Ribosomal protein bS6--L-glutamate ligase, found in Salmonella schwarzengrund (strain CVM19633).